A 424-amino-acid chain; its full sequence is Tyrosine--tRNA ligase (424 aa).

Y37 lines the L-tyrosine pocket. The short motif at 42 to 51 (PTADSLHLGH) is the 'HIGH' region element. Position 144 is an N6-acetyllysine (K144). Y175 and Q179 together coordinate L-tyrosine. The 'KMSKS' region motif lies at 235–239 (KFGKT). K238 provides a ligand contact to ATP. The 58-residue stretch at 357–414 (ADLMQALVDSELQPSRGQARKTIASNAITINGEKQSDPEYFFKEEDRLFGRFTLLRRG) folds into the S4 RNA-binding domain.

This sequence belongs to the class-I aminoacyl-tRNA synthetase family. TyrS type 1 subfamily. Homodimer.

The protein localises to the cytoplasm. The catalysed reaction is tRNA(Tyr) + L-tyrosine + ATP = L-tyrosyl-tRNA(Tyr) + AMP + diphosphate + H(+). Catalyzes the attachment of tyrosine to tRNA(Tyr) in a two-step reaction: tyrosine is first activated by ATP to form Tyr-AMP and then transferred to the acceptor end of tRNA(Tyr). The sequence is that of Tyrosine--tRNA ligase from Escherichia coli O8 (strain IAI1).